The primary structure comprises 202 residues: 3-isopropylmalate dehydratase small subunit (202 aa).

This sequence belongs to the LeuD family. LeuD type 1 subfamily. In terms of assembly, heterodimer of LeuC and LeuD.

It catalyses the reaction (2R,3S)-3-isopropylmalate = (2S)-2-isopropylmalate. The protein operates within amino-acid biosynthesis; L-leucine biosynthesis; L-leucine from 3-methyl-2-oxobutanoate: step 2/4. In terms of biological role, catalyzes the isomerization between 2-isopropylmalate and 3-isopropylmalate, via the formation of 2-isopropylmaleate. In Nocardioides sp. (strain ATCC BAA-499 / JS614), this protein is 3-isopropylmalate dehydratase small subunit.